The primary structure comprises 260 residues: Ubiquinone/menaquinone biosynthesis C-methyltransferase UbiE (260 aa).

S-adenosyl-L-methionine contacts are provided by residues Thr83, Asp104, and 132 to 133; that span reads NA.

Belongs to the class I-like SAM-binding methyltransferase superfamily. MenG/UbiE family.

It carries out the reaction a 2-demethylmenaquinol + S-adenosyl-L-methionine = a menaquinol + S-adenosyl-L-homocysteine + H(+). The catalysed reaction is a 2-methoxy-6-(all-trans-polyprenyl)benzene-1,4-diol + S-adenosyl-L-methionine = a 5-methoxy-2-methyl-3-(all-trans-polyprenyl)benzene-1,4-diol + S-adenosyl-L-homocysteine + H(+). Its pathway is quinol/quinone metabolism; menaquinone biosynthesis; menaquinol from 1,4-dihydroxy-2-naphthoate: step 2/2. It functions in the pathway cofactor biosynthesis; ubiquinone biosynthesis. In terms of biological role, methyltransferase required for the conversion of demethylmenaquinol (DMKH2) to menaquinol (MKH2) and the conversion of 2-polyprenyl-6-methoxy-1,4-benzoquinol (DDMQH2) to 2-polyprenyl-3-methyl-6-methoxy-1,4-benzoquinol (DMQH2). The chain is Ubiquinone/menaquinone biosynthesis C-methyltransferase UbiE from Bartonella henselae (strain ATCC 49882 / DSM 28221 / CCUG 30454 / Houston 1) (Rochalimaea henselae).